A 147-amino-acid polypeptide reads, in one-letter code: Ubiquitin-conjugating enzyme E2 D4 (147 aa).

The region spanning 1–147 (MALKRIQKEL…AREWTQKYAM (147 aa)) is the UBC core domain. Cys-85 (glycyl thioester intermediate) is an active-site residue.

The protein belongs to the ubiquitin-conjugating enzyme family. In terms of assembly, interacts with map3k10/mlk2. In terms of tissue distribution, at embryonic stages 28 to 35, expressed in the somites, eye primordia, otic vesicle and branchial arches. By stage 35, also weakly expressed in the pronephros.

The enzyme catalyses S-ubiquitinyl-[E1 ubiquitin-activating enzyme]-L-cysteine + [E2 ubiquitin-conjugating enzyme]-L-cysteine = [E1 ubiquitin-activating enzyme]-L-cysteine + S-ubiquitinyl-[E2 ubiquitin-conjugating enzyme]-L-cysteine.. The protein operates within protein modification; protein ubiquitination. Functionally, catalyzes the covalent attachment of ubiquitin to other proteins. Regulates pronephros development, possibly by promoting ubiquitination and thus inactivation or degradation of map3k10/mlk2. This Xenopus laevis (African clawed frog) protein is Ubiquitin-conjugating enzyme E2 D4 (ube2d4).